A 323-amino-acid chain; its full sequence is tRNA dimethylallyltransferase (323 aa).

Residue 12 to 19 (GPTAAGKT) participates in ATP binding. 14 to 19 (TAAGKT) lines the substrate pocket. 2 interaction with substrate tRNA regions span residues 37 to 40 (DSAL) and 161 to 165 (QRLIR).

Belongs to the IPP transferase family. As to quaternary structure, monomer. Mg(2+) serves as cofactor.

It carries out the reaction adenosine(37) in tRNA + dimethylallyl diphosphate = N(6)-dimethylallyladenosine(37) in tRNA + diphosphate. Its function is as follows. Catalyzes the transfer of a dimethylallyl group onto the adenine at position 37 in tRNAs that read codons beginning with uridine, leading to the formation of N6-(dimethylallyl)adenosine (i(6)A). The sequence is that of tRNA dimethylallyltransferase from Pseudomonas putida (strain W619).